The primary structure comprises 116 residues: Putative pterin-4-alpha-carbinolamine dehydratase (116 aa).

It belongs to the pterin-4-alpha-carbinolamine dehydratase family.

It catalyses the reaction (4aS,6R)-4a-hydroxy-L-erythro-5,6,7,8-tetrahydrobiopterin = (6R)-L-erythro-6,7-dihydrobiopterin + H2O. This chain is Putative pterin-4-alpha-carbinolamine dehydratase, found in Xylella fastidiosa (strain M12).